The primary structure comprises 428 residues: Trigger factor (428 aa).

The PPIase FKBP-type domain maps to 163–248 (GDMVIIDYKG…IHEIKEKEVP (86 aa)).

This sequence belongs to the FKBP-type PPIase family. Tig subfamily.

Its subcellular location is the cytoplasm. It catalyses the reaction [protein]-peptidylproline (omega=180) = [protein]-peptidylproline (omega=0). In terms of biological role, involved in protein export. Acts as a chaperone by maintaining the newly synthesized protein in an open conformation. Functions as a peptidyl-prolyl cis-trans isomerase. The polypeptide is Trigger factor (Alkaliphilus oremlandii (strain OhILAs) (Clostridium oremlandii (strain OhILAs))).